A 104-amino-acid chain; its full sequence is Holotricin-3 (104 aa).

The first 20 residues, 1 to 20 (MNKLIILGLACIIAVASAMP), serve as a signal peptide directing secretion. Positions 22–104 (GPGDGHGGGH…HHGGYQTHGY (83 aa)) are disordered. Residues 23-97 (PGDGHGGGHG…PGGHGGGHHG (75 aa)) are compositionally biased toward gly residues. Repeat copies occupy residues 27–30 (HGGG), 31–34 (HGGG), 35–38 (HGGG), 39–42 (HGNG), 43–46 (QGGG), 47–50 (HGHG), 51–54 (PGGG), 55–58 (FGGG), 59–62 (HGGG), 63–66 (HGGG), 67–70 (GRGG), 71–74 (GGSG), 75–78 (GGGS), 79–82 (PGHG), 83–86 (AGGG), 87–90 (YPGG), 91–94 (HGGG), and 96–98 (HGG). Positions 27–98 (HGGGHGGGHG…GGHGGGHHGG (72 aa)) are 18 X 4 AA approximate tandem repeats of H-G-G-G.

It to T.molitor tenecin 3.

It is found in the secreted. Functionally, has antifungal activity against C.albicans. The polypeptide is Holotricin-3 (Holotrichia diomphalia (Korean black chafer)).